The primary structure comprises 426 residues: Serine--tRNA ligase (426 aa).

Basic and acidic residues predominate over residues 1–15 (MIDVKDLSENPDKFR). The tract at residues 1-20 (MIDVKDLSENPDKFRASQRA) is disordered. 228 to 230 (TSE) is an L-serine binding site. Residues 259–261 (RRE) and Val275 contribute to the ATP site. Glu282 contributes to the L-serine binding site. 346–349 (ELTS) provides a ligand contact to ATP. Position 386 (Thr386) interacts with L-serine.

The protein belongs to the class-II aminoacyl-tRNA synthetase family. Type-1 seryl-tRNA synthetase subfamily. In terms of assembly, homodimer. The tRNA molecule binds across the dimer.

It localises to the cytoplasm. It catalyses the reaction tRNA(Ser) + L-serine + ATP = L-seryl-tRNA(Ser) + AMP + diphosphate + H(+). It carries out the reaction tRNA(Sec) + L-serine + ATP = L-seryl-tRNA(Sec) + AMP + diphosphate + H(+). Its pathway is aminoacyl-tRNA biosynthesis; selenocysteinyl-tRNA(Sec) biosynthesis; L-seryl-tRNA(Sec) from L-serine and tRNA(Sec): step 1/1. In terms of biological role, catalyzes the attachment of serine to tRNA(Ser). Is also able to aminoacylate tRNA(Sec) with serine, to form the misacylated tRNA L-seryl-tRNA(Sec), which will be further converted into selenocysteinyl-tRNA(Sec). The protein is Serine--tRNA ligase of Paenarthrobacter aurescens (strain TC1).